Here is a 255-residue protein sequence, read N- to C-terminus: 5-oxoprolinase subunit A (255 aa).

This sequence belongs to the LamB/PxpA family. In terms of assembly, forms a complex composed of PxpA, PxpB and PxpC.

It carries out the reaction 5-oxo-L-proline + ATP + 2 H2O = L-glutamate + ADP + phosphate + H(+). Functionally, catalyzes the cleavage of 5-oxoproline to form L-glutamate coupled to the hydrolysis of ATP to ADP and inorganic phosphate. This is 5-oxoprolinase subunit A from Campylobacter jejuni subsp. jejuni serotype O:6 (strain 81116 / NCTC 11828).